The chain runs to 665 residues: Probable potassium transport system protein Kup (665 aa).

The next 12 helical transmembrane spans lie at 15–35 (SFLIALGVVYGDIGTSPLYVM), 48–68 (ITPDFILGVLSLIFWTMTLLT), 100–120 (WLIIPAMVGGSALLADGMLTP), 147–167 (IIIIIVLVILSFLFFIQHFGT), 173–193 (IFGPVMFIWFAFLAILGIVNL), 219–239 (LGFFILGGVFLSTTGAEALYS), 251–271 (LTWPLVKICLLLNYFGQAAWI), 292–312 (MMPSWLLLFGVLISTLAAIIA), 348–368 (IYMPAINRILWIACIAIVLYF), 378–398 (YGLSITVTMLMTSILLFNYLL), 403–423 (PLPIALIILVFFGSLEFSFLI), and 431–451 (KGGFVSVLIALCILSIMYIWI).

It belongs to the HAK/KUP transporter (TC 2.A.72) family.

The protein resides in the cell membrane. It catalyses the reaction K(+)(in) + H(+)(in) = K(+)(out) + H(+)(out). In terms of biological role, transport of potassium into the cell. Likely operates as a K(+):H(+) symporter. This chain is Probable potassium transport system protein Kup, found in Clostridium perfringens (strain ATCC 13124 / DSM 756 / JCM 1290 / NCIMB 6125 / NCTC 8237 / Type A).